The sequence spans 126 residues: Large ribosomal subunit protein bL12 (126 aa).

It belongs to the bacterial ribosomal protein bL12 family. Homodimer. Part of the ribosomal stalk of the 50S ribosomal subunit. Forms a multimeric L10(L12)X complex, where L10 forms an elongated spine to which 2 to 4 L12 dimers bind in a sequential fashion. Binds GTP-bound translation factors.

Functionally, forms part of the ribosomal stalk which helps the ribosome interact with GTP-bound translation factors. Is thus essential for accurate translation. The polypeptide is Large ribosomal subunit protein bL12 (Methylobacterium nodulans (strain LMG 21967 / CNCM I-2342 / ORS 2060)).